Consider the following 406-residue polypeptide: Imidazolonepropionase (406 aa).

Fe(3+) is bound by residues His67 and His69. 2 residues coordinate Zn(2+): His67 and His69. 4-imidazolone-5-propanoate is bound by residues Arg76, Tyr139, and His172. Tyr139 contributes to the N-formimidoyl-L-glutamate binding site. Residue His237 coordinates Fe(3+). His237 contacts Zn(2+). Gln240 contacts 4-imidazolone-5-propanoate. Asp312 contributes to the Fe(3+) binding site. Asp312 is a binding site for Zn(2+). N-formimidoyl-L-glutamate contacts are provided by Asn314 and Gly316. Residue Thr317 coordinates 4-imidazolone-5-propanoate.

This sequence belongs to the metallo-dependent hydrolases superfamily. HutI family. Zn(2+) is required as a cofactor. It depends on Fe(3+) as a cofactor.

It is found in the cytoplasm. The enzyme catalyses 4-imidazolone-5-propanoate + H2O = N-formimidoyl-L-glutamate. It participates in amino-acid degradation; L-histidine degradation into L-glutamate; N-formimidoyl-L-glutamate from L-histidine: step 3/3. Its function is as follows. Catalyzes the hydrolytic cleavage of the carbon-nitrogen bond in imidazolone-5-propanoate to yield N-formimidoyl-L-glutamate. It is the third step in the universal histidine degradation pathway. The polypeptide is Imidazolonepropionase (Paraburkholderia phymatum (strain DSM 17167 / CIP 108236 / LMG 21445 / STM815) (Burkholderia phymatum)).